The following is a 931-amino-acid chain: Protein translocase subunit SecA (931 aa).

ATP-binding positions include Gln-87, 105–109 (GEGKT), and Asp-515. Cys-915, Cys-917, Cys-926, and His-927 together coordinate Zn(2+).

This sequence belongs to the SecA family. In terms of assembly, monomer and homodimer. Part of the essential Sec protein translocation apparatus which comprises SecA, SecYEG and auxiliary proteins SecDF-YajC and YidC. Zn(2+) serves as cofactor.

Its subcellular location is the cell inner membrane. It localises to the cytoplasm. It catalyses the reaction ATP + H2O + cellular proteinSide 1 = ADP + phosphate + cellular proteinSide 2.. Functionally, part of the Sec protein translocase complex. Interacts with the SecYEG preprotein conducting channel. Has a central role in coupling the hydrolysis of ATP to the transfer of proteins into and across the cell membrane, serving both as a receptor for the preprotein-SecB complex and as an ATP-driven molecular motor driving the stepwise translocation of polypeptide chains across the membrane. The protein is Protein translocase subunit SecA of Burkholderia ambifaria (strain ATCC BAA-244 / DSM 16087 / CCUG 44356 / LMG 19182 / AMMD) (Burkholderia cepacia (strain AMMD)).